The primary structure comprises 257 residues: Small ribosomal subunit protein uS15m (257 aa).

A mitochondrion-targeting transit peptide spans 1–57; that stretch reads MLRAAWRALSSVRVQAVTQAPVPALRARSSASLPSARCGLQTPSLLNAARAYAVQKP. Positions 228–257 are disordered; the sequence is KAAAAAAKKEKRERVPENPSNALPEKTKEN. A compositionally biased stretch (basic and acidic residues) spans 234-243; sequence AKKEKRERVP.

This sequence belongs to the universal ribosomal protein uS15 family. Component of the mitochondrial ribosome small subunit (28S) which comprises a 12S rRNA and about 30 distinct proteins. Interacts with METTL17.

It is found in the mitochondrion matrix. This Rattus norvegicus (Rat) protein is Small ribosomal subunit protein uS15m (Mrps15).